Here is a 328-residue protein sequence, read N- to C-terminus: Malate dehydrogenase (328 aa).

Residue 12-18 (GAAGQIA) participates in NAD(+) binding. Substrate is bound by residues Arg-93 and Arg-99. NAD(+)-binding positions include Asn-106, Gln-113, and 130–132 (VGN). Substrate is bound by residues Asn-132 and Arg-163. His-188 functions as the Proton acceptor in the catalytic mechanism.

This sequence belongs to the LDH/MDH superfamily. MDH type 2 family.

It carries out the reaction (S)-malate + NAD(+) = oxaloacetate + NADH + H(+). Its function is as follows. Catalyzes the reversible oxidation of malate to oxaloacetate. The polypeptide is Malate dehydrogenase (Burkholderia cenocepacia (strain ATCC BAA-245 / DSM 16553 / LMG 16656 / NCTC 13227 / J2315 / CF5610) (Burkholderia cepacia (strain J2315))).